The following is a 468-amino-acid chain: Cysteine--tRNA ligase (468 aa).

Cysteine 33 provides a ligand contact to Zn(2+). The 'HIGH' region motif lies at 35-45 (ATVQGLPHIGH). Cysteine 211, histidine 236, and glutamate 240 together coordinate Zn(2+). Positions 267 to 271 (KMSKS) match the 'KMSKS' region motif. Lysine 270 serves as a coordination point for ATP.

Belongs to the class-I aminoacyl-tRNA synthetase family. Monomer. Requires Zn(2+) as cofactor.

It localises to the cytoplasm. The enzyme catalyses tRNA(Cys) + L-cysteine + ATP = L-cysteinyl-tRNA(Cys) + AMP + diphosphate. In Mycobacterium marinum (strain ATCC BAA-535 / M), this protein is Cysteine--tRNA ligase.